The primary structure comprises 385 residues: Exopolygalacturonase rpg15 (385 aa).

The signal sequence occupies residues 1–26 (MVRFISFTSPIAALLLLSFGVKHAST). Residues N143, N161, N164, and N180 are each glycosylated (N-linked (GlcNAc...) asparagine). PbH1 repeat units lie at residues 165–195 (STNL…DLYH), 196–217 (SSGI…AIKE), 219–241 (VEKV…GSLG), and 249–270 (VKHV…RVKT). D210 functions as the Proton donor in the catalytic mechanism. An intrachain disulfide couples C212 to C229. N-linked (GlcNAc...) asparagine glycosylation is present at N226. H233 is a catalytic residue. N-linked (GlcNAc...) asparagine glycosylation is found at N256, N319, and N343. An intrachain disulfide couples C344 to C350. Residues 350–376 (CSDITFSGIDITKASNTTDNVCVYLEG) form a PbH1 5 repeat. N-linked (GlcNAc...) asparagine glycosylation occurs at N365.

The protein belongs to the glycosyl hydrolase 28 family. Post-translationally, N-glycosylated.

It is found in the secreted. The enzyme catalyses [(1-&gt;4)-alpha-D-galacturonosyl](n) + H2O = alpha-D-galacturonate + [(1-&gt;4)-alpha-D-galacturonosyl](n-1). In terms of biological role, specific in hydrolyzing the terminal glycosidic bond of polygalacturonic acid and oligogalacturonates. In Rhizopus delemar (strain RA 99-880 / ATCC MYA-4621 / FGSC 9543 / NRRL 43880) (Mucormycosis agent), this protein is Exopolygalacturonase rpg15.